The primary structure comprises 92 residues: Cell division protein FtsL (92 aa).

At 1–3 the chain is on the cytoplasmic side; it reads MGR. Residues 4-21 form a helical membrane-spanning segment; it reads ISLIVAALLMLSAISLVT. Residues 22-92 are Periplasmic-facing; that stretch reads SRYQSRQLFI…YMNQPAGGAQ (71 aa).

This sequence belongs to the FtsL family. Part of a complex composed of FtsB, FtsL and FtsQ.

Its subcellular location is the cell inner membrane. Its function is as follows. Essential cell division protein. May link together the upstream cell division proteins, which are predominantly cytoplasmic, with the downstream cell division proteins, which are predominantly periplasmic. This Bordetella pertussis (strain Tohama I / ATCC BAA-589 / NCTC 13251) protein is Cell division protein FtsL.